The following is a 173-amino-acid chain: C-phycocyanin beta subunit (173 aa).

The residue at position 73 (Asn-73) is an N4-methylasparagine. 2 residues coordinate (2R,3E)-phycocyanobilin: Cys-83 and Cys-154.

It belongs to the phycobiliprotein family. In terms of assembly, heterodimer of an alpha and a beta subunit. Heterodimers further assemble into trimers and the trimers into hexamers. In terms of processing, contains two covalently linked bilin chromophores.

It localises to the cellular thylakoid membrane. Functionally, light-harvesting photosynthetic bile pigment-protein from the phycobiliprotein complex (phycobilisome, PBS). Phycocyanin is the major phycobiliprotein in the PBS rod. The chain is C-phycocyanin beta subunit (cpcB) from Mastigocladus laminosus (Fischerella sp.).